The following is a 684-amino-acid chain: Coiled-coil domain-containing protein 62 (684 aa).

Coiled-coil stretches lie at residues 11–160 (RQNI…QALT) and 199–322 (TCIV…ESKA). The segment at 579–603 (SLGSSKSALREDETESSSNKKNSPT) is disordered. Polar residues predominate over residues 594 to 603 (SSSNKKNSPT). 2 consecutive short sequence motifs (LXXLL motif) follow at residues 634–638 (LQRLL) and 650–654 (LSTLL). Positions 657–684 (SHENLTGSATNKSEVPEESAQKNTFVSY) are disordered. The segment covering 659 to 669 (ENLTGSATNKS) has biased composition (polar residues).

Interacts with ESR1 and ESR2 in the presence of estradiol/E2. The interaction with ESR2 recruits CCDC62 to ER target genes, including cyclin-D1/CCND1 AP-1 promoter. Interacts with GOPC. As to expression, highly expressed in adult testis. Expressed in both prostate epithelial and stromal cells, with predominant expression in epithelial cells (at protein level). Not detected in prostate by RT-PCR. Overexpressed in various cancers.

The protein resides in the cytoplasm. Its subcellular location is the nucleus. It is found in the cytoplasmic vesicle. The protein localises to the secretory vesicle. It localises to the acrosome. In terms of biological role, nuclear receptor coactivator that can enhance preferentially estrogen receptors ESR1 and ESR2 transactivation. Also modulates progesterone/PGR, glucocorticoid/NR3C1 and androgen/AR receptors transactivation, although at lower level; little effect on vitamin D receptor/VDR. Required for normal spermiogenesis. It probably plays a role in acrosome formation. The polypeptide is Coiled-coil domain-containing protein 62 (CCDC62) (Homo sapiens (Human)).